We begin with the raw amino-acid sequence, 271 residues long: Formamidopyrimidine-DNA glycosylase (271 aa).

Catalysis depends on proline 2, which acts as the Schiff-base intermediate with DNA. Residue glutamate 3 is the Proton donor of the active site. The active-site Proton donor; for beta-elimination activity is lysine 57. Histidine 90, arginine 109, and lysine 151 together coordinate DNA. The FPG-type zinc-finger motif lies at 236-270 (HVYGRGGESCTQCGNLLSEIKLGQRATVFCGLCQT). Arginine 260 serves as the catalytic Proton donor; for delta-elimination activity.

This sequence belongs to the FPG family. Monomer. Zn(2+) serves as cofactor.

It catalyses the reaction Hydrolysis of DNA containing ring-opened 7-methylguanine residues, releasing 2,6-diamino-4-hydroxy-5-(N-methyl)formamidopyrimidine.. It carries out the reaction 2'-deoxyribonucleotide-(2'-deoxyribose 5'-phosphate)-2'-deoxyribonucleotide-DNA = a 3'-end 2'-deoxyribonucleotide-(2,3-dehydro-2,3-deoxyribose 5'-phosphate)-DNA + a 5'-end 5'-phospho-2'-deoxyribonucleoside-DNA + H(+). In terms of biological role, involved in base excision repair of DNA damaged by oxidation or by mutagenic agents. Acts as a DNA glycosylase that recognizes and removes damaged bases. Has a preference for oxidized purines, such as 7,8-dihydro-8-oxoguanine (8-oxoG). Has AP (apurinic/apyrimidinic) lyase activity and introduces nicks in the DNA strand. Cleaves the DNA backbone by beta-delta elimination to generate a single-strand break at the site of the removed base with both 3'- and 5'-phosphates. This Shewanella woodyi (strain ATCC 51908 / MS32) protein is Formamidopyrimidine-DNA glycosylase.